The sequence spans 938 residues: Isoleucine--tRNA ligase (938 aa).

Positions 58–68 (PYANGSIHIGH) match the 'HIGH' region motif. At lysine 183 the chain carries N6-acetyllysine. Glutamate 561 is a binding site for L-isoleucyl-5'-AMP. The short motif at 602-606 (KMSKS) is the 'KMSKS' region element. ATP is bound at residue lysine 605. The Zn(2+) site is built by cysteine 901, cysteine 904, cysteine 921, and cysteine 924.

This sequence belongs to the class-I aminoacyl-tRNA synthetase family. IleS type 1 subfamily. As to quaternary structure, monomer. It depends on Zn(2+) as a cofactor.

It localises to the cytoplasm. It carries out the reaction tRNA(Ile) + L-isoleucine + ATP = L-isoleucyl-tRNA(Ile) + AMP + diphosphate. Catalyzes the attachment of isoleucine to tRNA(Ile). As IleRS can inadvertently accommodate and process structurally similar amino acids such as valine, to avoid such errors it has two additional distinct tRNA(Ile)-dependent editing activities. One activity is designated as 'pretransfer' editing and involves the hydrolysis of activated Val-AMP. The other activity is designated 'posttransfer' editing and involves deacylation of mischarged Val-tRNA(Ile). The chain is Isoleucine--tRNA ligase from Shigella dysenteriae serotype 1 (strain Sd197).